Consider the following 212-residue polypeptide: 3-isopropylmalate dehydratase small subunit (212 aa).

This sequence belongs to the LeuD family. LeuD type 1 subfamily. Heterodimer of LeuC and LeuD.

The catalysed reaction is (2R,3S)-3-isopropylmalate = (2S)-2-isopropylmalate. It participates in amino-acid biosynthesis; L-leucine biosynthesis; L-leucine from 3-methyl-2-oxobutanoate: step 2/4. Catalyzes the isomerization between 2-isopropylmalate and 3-isopropylmalate, via the formation of 2-isopropylmaleate. The protein is 3-isopropylmalate dehydratase small subunit of Thiobacillus denitrificans (strain ATCC 25259 / T1).